Here is a 584-residue protein sequence, read N- to C-terminus: FAD-linked oxidoreductase OXR2 (584 aa).

A signal peptide spans 1–22 (MRSIISAFILSLNFCTQPLVRG). N-linked (GlcNAc...) asparagine glycans are attached at residues N75, N97, N115, N225, N302, N321, and N507. Residues 128-310 (LGMLSEKYIA…LNATFKVEPV (183 aa)) form the FAD-binding PCMH-type domain.

Belongs to the oxygen-dependent FAD-linked oxidoreductase family. It depends on FAD as a cofactor.

The protein operates within secondary metabolite biosynthesis. In terms of biological role, FAD-linked oxidoreductase; part of the gene cluster that mediates the biosynthesis of a tyrosine-derived cytochalasan acting as a fungal signal recognized by resistant rice plants and leads to avirulence in Pi33 resistant rice cultivars. The first step in the pathway is catalyzed by the hybrid PKS-NRPS ACE1, assisted by the enoyl reductase RAP1, that are responsible for fusion of the tyrosine precursor and the polyketide backbone. The polyketide synthase module (PKS) of ACE1 is responsible for the synthesis of the polyketide backbone and the downstream nonribosomal peptide synthetase (NRPS) amidates the carboxyl end of the polyketide with the tyrosine precursor. Because ACE1 lacks a designated enoylreductase (ER) domain, the required activity is provided the enoyl reductase RAP1. Reduction by the hydrolyase ORFZ, followed by dehydration and intra-molecular Diels-Alder cyclization by the Diels-Alderase ORF3 then yield the required isoindolone-fused macrocycle. A number of oxidative steps catalyzed by the tailoring enzymes identified within the cluster, including cytochrome P450 monooxygenases CYP1 to CYP4, the FAD-linked oxidoreductase OXR2 and the short-chain dehydrogenase/reductase OXR1, are further required to afford the final cytochalasans that confer avirulence and which have still to be identified. The monooxygenase CYP1 has been shown to be a site-selective C-18 hydroxylase whereas the function of CYP3 is the site-selective epoxidation of the C-6/C-7 olefin that is present in some intermediate compounds. Finally, SYN2 and RAP2 are not required for avirulence in Pi33 resistant rice cultivars. The polypeptide is FAD-linked oxidoreductase OXR2 (Pyricularia oryzae (strain 70-15 / ATCC MYA-4617 / FGSC 8958) (Rice blast fungus)).